The primary structure comprises 105 residues: Large ribosomal subunit protein bL21 (105 aa).

It belongs to the bacterial ribosomal protein bL21 family. Part of the 50S ribosomal subunit. Contacts protein L20.

Functionally, this protein binds to 23S rRNA in the presence of protein L20. This chain is Large ribosomal subunit protein bL21, found in Natranaerobius thermophilus (strain ATCC BAA-1301 / DSM 18059 / JW/NM-WN-LF).